The sequence spans 475 residues: Glutamyl-tRNA(Gln) amidotransferase subunit A (475 aa).

Residues lysine 69 and serine 144 each act as charge relay system in the active site. Serine 168 (acyl-ester intermediate) is an active-site residue.

This sequence belongs to the amidase family. GatA subfamily. Heterotrimer of A, B and C subunits.

The enzyme catalyses L-glutamyl-tRNA(Gln) + L-glutamine + ATP + H2O = L-glutaminyl-tRNA(Gln) + L-glutamate + ADP + phosphate + H(+). Its function is as follows. Allows the formation of correctly charged Gln-tRNA(Gln) through the transamidation of misacylated Glu-tRNA(Gln) in organisms which lack glutaminyl-tRNA synthetase. The reaction takes place in the presence of glutamine and ATP through an activated gamma-phospho-Glu-tRNA(Gln). In Methanococcoides burtonii (strain DSM 6242 / NBRC 107633 / OCM 468 / ACE-M), this protein is Glutamyl-tRNA(Gln) amidotransferase subunit A.